A 293-amino-acid chain; its full sequence is MTAVPAHDHHTLQDFIERHQRLFVLTGAGCSTDSGIPDYRDLQGGWKRPQPVTFQAFMGELSTRQRYWARSLVGWPRFGLAQPNATHHALAALEARGQLEVLLTQNVDRLHQAAGSQAVIDLHGRLDVVRCMGCERRMPRTEFQVLLEQANPGWAALEAAQAPDGDADLDDVAFEHFVVPPCPVCGGVLKPNVVFFGENVPRARVERAFAHLQAADAVLVVGSSLMVYSGFRFVQTAARNGLPIAALNFGRTRADELLTLKVEQSCAQALAFLHAPPHLPRARSVNDASARSA.

The 278-residue stretch at 5 to 282 (PAHDHHTLQD…LHAPPHLPRA (278 aa)) folds into the Deacetylase sirtuin-type domain. NAD(+)-binding positions include 27 to 47 (GAGC…GGWK) and 105 to 108 (QNVD). The active-site Proton acceptor is H123. Positions 131, 134, 182, and 185 each coordinate Zn(2+). NAD(+) contacts are provided by residues 222-224 (GSS), 248-250 (NFG), and C266.

Belongs to the sirtuin family. Class II subfamily. It depends on Zn(2+) as a cofactor.

The protein resides in the cytoplasm. The catalysed reaction is N(6)-acetyl-L-lysyl-[protein] + NAD(+) + H2O = 2''-O-acetyl-ADP-D-ribose + nicotinamide + L-lysyl-[protein]. NAD-dependent protein deacetylase which modulates the activities of several enzymes which are inactive in their acetylated form. In Xanthomonas axonopodis pv. citri (strain 306), this protein is NAD-dependent protein deacetylase.